Reading from the N-terminus, the 111-residue chain is UPF0060 membrane protein xcc-b100_1273 (111 aa).

4 helical membrane-spanning segments follow: residues 8–28 (LLLF…PYLW), 34–54 (SVWL…LLTL), 62–82 (VYAA…WWVD), and 91–111 (LLGA…PRSG).

The protein belongs to the UPF0060 family.

It is found in the cell inner membrane. The polypeptide is UPF0060 membrane protein xcc-b100_1273 (Xanthomonas campestris pv. campestris (strain B100)).